We begin with the raw amino-acid sequence, 492 residues long: MVLVWLLLLLTLLAGARLLWGQWKLRNLHLPPLVPGFLHLLQPNLPIYLLGLTQRLGPIYRLRLGLQDVVVLNSKRTIEEALVRKWVDFAGRPQIPSYKLASQHCPDISLGDYSLFWKAHKKLTRSALLLGVRSSMEPRVEQLTQEFCERMRAQAGTPVTIQKEFSVLTCSIICCLTFGDKEDTLVHALHDCVQDLMKTWEHWSIQILDMVPFLRFFPSPGLRRLKQAIENRDHLVEKQLRRHKESMVAGQWRDMLDYMLQEAGRQRVEEGQGQLLEGHVHMSVVDLFIGGTETTANTLSWAVVYLLHHPEIQWRLQEELDRELGPGAAGSRVPYKDRARLPLLNATIAEVLRLRPVVPLALPHRATRPSSIFGYDIPEGTVVIPNLQGAHLDETVWEQPHEFRPDRFLAPGANPSALAFGCGARVCLGEPLARLELFVVLVQLLQAFTLLPPEGALPSLQPHPHSGINLKVQPFQVRLQPRGGRGEGPGPR.

Heme b is bound by residues arginine 92 and lysine 121. Arginine 232 contributes to the 17alpha-hydroxyprogesterone binding site. A progesterone-binding site is contributed by arginine 232. Heme b contacts are provided by histidine 364, arginine 425, and cysteine 427.

It belongs to the cytochrome P450 family. It depends on heme b as a cofactor.

The protein resides in the endoplasmic reticulum membrane. It localises to the microsome membrane. It carries out the reaction progesterone + reduced [NADPH--hemoprotein reductase] + O2 = 21-hydroxyprogesterone + oxidized [NADPH--hemoprotein reductase] + H2O + H(+). It catalyses the reaction 17alpha-hydroxyprogesterone + reduced [NADPH--hemoprotein reductase] + O2 = 11-deoxycortisol + oxidized [NADPH--hemoprotein reductase] + H2O + H(+). A cytochrome P450 monooxygenase that plays a major role in adrenal steroidogenesis. Catalyzes the hydroxylation at C-21 of progesterone and 17alpha-hydroxyprogesterone to respectively form 11-deoxycorticosterone and 11-deoxycortisol, intermediate metabolites in the biosynthetic pathway of mineralocorticoids and glucocorticoids. Mechanistically, uses molecular oxygen inserting one oxygen atom into a substrate, and reducing the second into a water molecule, with two electrons provided by NADPH via cytochrome P450 reductase (CPR; NADPH-ferrihemoprotein reductase). The sequence is that of Steroid 21-hydroxylase (CYP21) from Sus scrofa (Pig).